Reading from the N-terminus, the 607-residue chain is ATP-dependent RNA helicase DBP6 (607 aa).

The interval 1–83 is disordered; it reads MFAARFDPSR…GTGEADKRHQ (83 aa). A compositionally biased stretch (acidic residues) spans 34 to 59; the sequence is QDESESEMSSAESEDEAMQLDDEEEV. A compositionally biased stretch (basic and acidic residues) spans 60 to 69; the sequence is VDSKGKENHG. The Q motif motif lies at 184-192; sequence AFPIQTALL. Residues 208-388 form the Helicase ATP-binding domain; it reads RYYTRKVGDI…DLQLHNPKLF (181 aa). 221 to 228 contributes to the ATP binding site; the sequence is ASTGSGKT. Positions 328-331 match the DEAD box motif; sequence DEAD. One can recognise a Helicase C-terminal domain in the interval 419 to 578; sequence ILLRLLPLLS…GSHLFFDEEQ (160 aa).

Belongs to the DEAD box helicase family. DDX51/DBP6 subfamily. Associated with pre-ribosomal particles.

The protein resides in the nucleus. It is found in the nucleolus. The catalysed reaction is ATP + H2O = ADP + phosphate + H(+). Its function is as follows. ATP-binding RNA helicase involved in the biogenesis of 60S ribosomal subunits and is required for the normal formation of 25S and 5.8S rRNAs. The chain is ATP-dependent RNA helicase DBP6 (DBP6) from Eremothecium gossypii (strain ATCC 10895 / CBS 109.51 / FGSC 9923 / NRRL Y-1056) (Yeast).